Consider the following 365-residue polypeptide: Palmitoyltransferase ZDHHC20 (365 aa).

The Cytoplasmic portion of the chain corresponds to 1–14 (MAPWTLWRCCQRVV). The chain crosses the membrane as a helical span at residues 15–35 (GWVPVLFITFVVVWSYYAYVV). At 36–53 (ELCVFTIFGNEENGKTVV) the chain is on the lumenal side. A helical transmembrane segment spans residues 54 to 74 (YLVAFHLFFVMFVWSYWMTIF). Residues 75 to 169 (TSPASPSKEF…NNCVGFSNYK (95 aa)) lie on the Cytoplasmic side of the membrane. Residues 126 to 176 (RYCEKCQLIKPDRAHHCSACDSCILKMDHHCPWVNNCVGFSNYKFFLLFLL) enclose the DHHC domain. Residues C128 and C131 each contribute to the Zn(2+) site. Residues K135 and 140-143 (HHCS) contribute to the substrate site. H141, C142, C145, C148, and H155 together coordinate Zn(2+). The S-palmitoyl cysteine intermediate role is filled by C156. C162 provides a ligand contact to Zn(2+). A helical membrane pass occupies residues 170–190 (FFLLFLLYSLLYCLFVAATVL). Topologically, residues 191-207 (EYFIKFWTNELTDTRAK) are lumenal. The helical transmembrane segment at 208-231 (FHVLFLFFVSAMFFISVLSLFSYH) threads the bilayer. The Cytoplasmic portion of the chain corresponds to 232–365 (CWLVGKNRTT…NNHVTVAIEN (134 aa)). A phosphoserine mark is found at S305, S330, and S339.

This sequence belongs to the DHHC palmitoyltransferase family. Post-translationally, autopalmitoylated (in vitro).

The protein localises to the golgi apparatus membrane. It is found in the cell membrane. Its subcellular location is the cytoplasm. It localises to the perinuclear region. The protein resides in the endoplasmic reticulum membrane. The protein localises to the endoplasmic reticulum-Golgi intermediate compartment membrane. The catalysed reaction is L-cysteinyl-[protein] + hexadecanoyl-CoA = S-hexadecanoyl-L-cysteinyl-[protein] + CoA. It carries out the reaction L-cysteinyl-[protein] + tetradecanoyl-CoA = S-tetradecanoyl-L-cysteinyl-[protein] + CoA. The enzyme catalyses L-cysteinyl-[protein] + octadecanoyl-CoA = S-octadecanoyl-L-cysteinyl-[protein] + CoA. Functionally, palmitoyltransferase that could catalyze the addition of palmitate onto various protein substrates. Catalyzes palmitoylation of Cys residues in the cytoplasmic C-terminus of EGFR, and modulates the duration of EGFR signaling by modulating palmitoylation-dependent EGFR internalization and degradation. Has a preference for acyl-CoA with C16 fatty acid chains. Can also utilize acyl-CoA with C14 and C18 fatty acid chains. May palmitoylate CALHM1 subunit of gustatory voltage-gated ion channels and modulate channel gating and kinetics. (Microbial infection) Dominant palmitoyltransferase responsible for lipidation of SARS coronavirus-2/SARS-CoV-2 spike protein. Through a sequential action with ZDHHC9, rapidly and efficiently palmitoylates spike protein following its synthesis in the endoplasmic reticulum (ER). In the infected cell, promotes spike biogenesis by protecting it from premature ER degradation, increases half-life and controls the lipid organization of its immediate membrane environment. Once the virus has formed, spike palmitoylation controls fusion with the target cell. The sequence is that of Palmitoyltransferase ZDHHC20 from Homo sapiens (Human).